We begin with the raw amino-acid sequence, 332 residues long: Aspartate carbamoyltransferase catalytic subunit (332 aa).

Residues R78 and T79 each contribute to the carbamoyl phosphate site. K106 contributes to the L-aspartate binding site. R128, H156, and Q159 together coordinate carbamoyl phosphate. Residues R189 and R243 each coordinate L-aspartate. The carbamoyl phosphate site is built by G284 and P285.

It belongs to the aspartate/ornithine carbamoyltransferase superfamily. ATCase family. As to quaternary structure, heterododecamer (2C3:3R2) of six catalytic PyrB chains organized as two trimers (C3), and six regulatory PyrI chains organized as three dimers (R2).

The enzyme catalyses carbamoyl phosphate + L-aspartate = N-carbamoyl-L-aspartate + phosphate + H(+). It functions in the pathway pyrimidine metabolism; UMP biosynthesis via de novo pathway; (S)-dihydroorotate from bicarbonate: step 2/3. Its function is as follows. Catalyzes the condensation of carbamoyl phosphate and aspartate to form carbamoyl aspartate and inorganic phosphate, the committed step in the de novo pyrimidine nucleotide biosynthesis pathway. The chain is Aspartate carbamoyltransferase catalytic subunit from Caulobacter vibrioides (strain ATCC 19089 / CIP 103742 / CB 15) (Caulobacter crescentus).